Reading from the N-terminus, the 154-residue chain is MAFLVALLVVLGLQLVQSNALTCHVCEAQNSYACSNPSQCPGEKKFCLLAVTRIFERFFYVSKQCTRRCPTPVVSPPSTNPPSEPKEFLIEKPMPFLFYKCCQWDSCNGEGPPTDQLLKEQPGKASGRRHRYIELLLTGFMVLTANGLSALCLL.

An N-terminal signal peptide occupies residues 1 to 20; it reads MAFLVALLVVLGLQLVQSNA. Positions 21–117 constitute a UPAR/Ly6 domain; sequence LTCHVCEAQN…NGEGPPTDQL (97 aa). Gly-123 carries the GPI-anchor amidated glycine lipid modification. A propeptide spans 124–154 (removed in mature form); that stretch reads KASGRRHRYIELLLTGFMVLTANGLSALCLL.

As to quaternary structure, interacts with ADAM3 and TEX101. As to expression, strongly expressed in testes and weakly expressed in the epididymis, ovary, and uterus. Expressed in testicular germ cells (TGCs). Expressed in the testicular seminiferous tubules, in spermatocytes, spermatids, and testicular spermatozoa.

It is found in the secreted. The protein resides in the cytoplasm. It localises to the cell membrane. The protein localises to the cytoplasmic vesicle. Its subcellular location is the secretory vesicle. It is found in the acrosome. The protein resides in the membrane raft. Its function is as follows. Required for sperm migration into the oviduct and male fertility by controlling binding of sperm to zona pellucida. May play a role in cell growth. The protein is Lymphocyte antigen 6K of Mus musculus (Mouse).